The following is a 380-amino-acid chain: Methenyltetrahydrofolate synthase domain-containing protein (380 aa).

The span at 245 to 258 (EEQAGKDVTLRDGP) shows a compositional bias: basic and acidic residues. Disordered stretches follow at residues 245–283 (EEQAGKDVTLRDGPRSPPGATRSPRDLAPPELGSVPLSS) and 361–380 (LVGSHTAEPLPDHQPAIAGP). One can recognise an RRM domain in the interval 282–355 (SSVQIGNLPR…NTVRVVLARQ (74 aa)).

The polypeptide is Methenyltetrahydrofolate synthase domain-containing protein (MTHFSD) (Bos taurus (Bovine)).